The sequence spans 403 residues: Putative glutamate--cysteine ligase 2 (403 aa).

Positions 370–403 (ESAAQRRAPQAARRRIRASSEPLGPMSMWPERLH) are disordered.

This sequence belongs to the glutamate--cysteine ligase type 2 family. YbdK subfamily.

The catalysed reaction is L-cysteine + L-glutamate + ATP = gamma-L-glutamyl-L-cysteine + ADP + phosphate + H(+). ATP-dependent carboxylate-amine ligase which exhibits weak glutamate--cysteine ligase activity. The polypeptide is Putative glutamate--cysteine ligase 2 (Bordetella avium (strain 197N)).